The chain runs to 362 residues: Sphingolipid delta(4)-desaturase (362 aa).

The span at 1–10 (MAESTATTTA) shows a compositional bias: low complexity. A disordered region spans residues 1-20 (MAESTATTTAVPPPAEESWN). The next 3 helical transmembrane spans lie at 60–80 (PLTK…AYLL), 90–110 (FFLT…LAIH), and 121–143 (TLYN…AASF). The Histidine box-1 signature appears at 110 to 114 (HELSH). Residues 147 to 151 (HMEHH) carry the Histidine box-2 motif. Helical transmembrane passes span 169–189 (LILF…LLFY), 200–220 (PFTL…YLVV), and 228–248 (LAYF…AGHF). Residues 290–294 (HIEHH) carry the Histidine box-3 motif.

It belongs to the fatty acid desaturase type 1 family. DEGS subfamily.

It localises to the membrane. The catalysed reaction is an N-acylsphinganine + 2 Fe(II)-[cytochrome b5] + O2 + 2 H(+) = an N-acylsphing-4-enine + 2 Fe(III)-[cytochrome b5] + 2 H2O. It participates in lipid metabolism; sphingolipid metabolism. In terms of biological role, delta(4)-fatty-acid desaturase which introduces a double bond at the 4-position in the long-chain base (LCB) of ceramides. Required for sphingosine biosynthesis. This is Sphingolipid delta(4)-desaturase (dsd1) from Schizosaccharomyces pombe (strain 972 / ATCC 24843) (Fission yeast).